The sequence spans 1349 residues: DNA-directed RNA polymerase subunit beta' (1349 aa).

Positions 70, 72, 85, and 88 each coordinate Zn(2+). Residues Asp460, Asp462, and Asp464 each coordinate Mg(2+). The Zn(2+) site is built by Cys801, Cys875, Cys882, and Cys885.

Belongs to the RNA polymerase beta' chain family. As to quaternary structure, the RNAP catalytic core consists of 2 alpha, 1 beta, 1 beta' and 1 omega subunit. When a sigma factor is associated with the core the holoenzyme is formed, which can initiate transcription. It depends on Mg(2+) as a cofactor. The cofactor is Zn(2+).

The enzyme catalyses RNA(n) + a ribonucleoside 5'-triphosphate = RNA(n+1) + diphosphate. DNA-dependent RNA polymerase catalyzes the transcription of DNA into RNA using the four ribonucleoside triphosphates as substrates. The chain is DNA-directed RNA polymerase subunit beta' from Desulfotalea psychrophila (strain LSv54 / DSM 12343).